The sequence spans 133 residues: MSDWLDAVKWDAQGLVPAIAQDAASGEILMVAWMNREALEETARTGRGVYFSRSRHKLWRKGEESGHVQTVSEIRLDCDNDVILLKIEQLGGIACHTGRRSCFFHKLTTDDRGHADWVATEPVLKNPDEIYRR.

Asp77 contributes to the Mg(2+) binding site. Cys78 contributes to the Zn(2+) binding site. Asp79 and Asp81 together coordinate Mg(2+). Zn(2+)-binding residues include Cys95 and Cys102.

It belongs to the PRA-CH family. As to quaternary structure, homodimer. Requires Mg(2+) as cofactor. Zn(2+) is required as a cofactor.

The protein resides in the cytoplasm. The catalysed reaction is 1-(5-phospho-beta-D-ribosyl)-5'-AMP + H2O = 1-(5-phospho-beta-D-ribosyl)-5-[(5-phospho-beta-D-ribosylamino)methylideneamino]imidazole-4-carboxamide. It participates in amino-acid biosynthesis; L-histidine biosynthesis; L-histidine from 5-phospho-alpha-D-ribose 1-diphosphate: step 3/9. In terms of biological role, catalyzes the hydrolysis of the adenine ring of phosphoribosyl-AMP. The sequence is that of Phosphoribosyl-AMP cyclohydrolase from Thiobacillus denitrificans (strain ATCC 25259 / T1).